The primary structure comprises 457 residues: Argininosuccinate lyase (457 aa).

The protein belongs to the lyase 1 family. Argininosuccinate lyase subfamily.

Its subcellular location is the cytoplasm. It catalyses the reaction 2-(N(omega)-L-arginino)succinate = fumarate + L-arginine. Its pathway is amino-acid biosynthesis; L-arginine biosynthesis; L-arginine from L-ornithine and carbamoyl phosphate: step 3/3. The sequence is that of Argininosuccinate lyase from Escherichia coli O157:H7 (strain EC4115 / EHEC).